We begin with the raw amino-acid sequence, 260 residues long: Phosphate import ATP-binding protein PstB (260 aa).

Positions 14 to 255 (IETENLNLFY…PKNTKTEEYI (242 aa)) constitute an ABC transporter domain. 46 to 53 (GPSGCGKS) is an ATP binding site.

Belongs to the ABC transporter superfamily. Phosphate importer (TC 3.A.1.7) family. As to quaternary structure, the complex is composed of two ATP-binding proteins (PstB), two transmembrane proteins (PstC and PstA) and a solute-binding protein (PstS).

It is found in the cell inner membrane. It catalyses the reaction phosphate(out) + ATP + H2O = ADP + 2 phosphate(in) + H(+). Part of the ABC transporter complex PstSACB involved in phosphate import. Responsible for energy coupling to the transport system. The chain is Phosphate import ATP-binding protein PstB from Borreliella burgdorferi (strain ATCC 35210 / DSM 4680 / CIP 102532 / B31) (Borrelia burgdorferi).